We begin with the raw amino-acid sequence, 205 residues long: Small ribosomal subunit protein uS4 (205 aa).

A compositionally biased stretch (basic and acidic residues) spans 1 to 16; it reads MSKRESSKYKIDRRMG. The segment at 1-46 is disordered; it reads MSKRESSKYKIDRRMGENIWGRPKSPVNRREYGPGQHGQRRKGKLS. An S4 RNA-binding domain is found at 94–157; that stretch reads SRLDAIVYRA…KQLVTVLEAV (64 aa).

The protein belongs to the universal ribosomal protein uS4 family. As to quaternary structure, part of the 30S ribosomal subunit. Contacts protein S5. The interaction surface between S4 and S5 is involved in control of translational fidelity.

Functionally, one of the primary rRNA binding proteins, it binds directly to 16S rRNA where it nucleates assembly of the body of the 30S subunit. In terms of biological role, with S5 and S12 plays an important role in translational accuracy. This chain is Small ribosomal subunit protein uS4, found in Rhizobium etli (strain ATCC 51251 / DSM 11541 / JCM 21823 / NBRC 15573 / CFN 42).